The chain runs to 298 residues: UDP-3-O-acyl-N-acetylglucosamine deacetylase (298 aa).

Zn(2+)-binding residues include H75, H232, and D236. Residue H259 is the Proton donor of the active site.

It belongs to the LpxC family. Zn(2+) serves as cofactor.

It catalyses the reaction a UDP-3-O-[(3R)-3-hydroxyacyl]-N-acetyl-alpha-D-glucosamine + H2O = a UDP-3-O-[(3R)-3-hydroxyacyl]-alpha-D-glucosamine + acetate. The protein operates within glycolipid biosynthesis; lipid IV(A) biosynthesis; lipid IV(A) from (3R)-3-hydroxytetradecanoyl-[acyl-carrier-protein] and UDP-N-acetyl-alpha-D-glucosamine: step 2/6. Catalyzes the hydrolysis of UDP-3-O-myristoyl-N-acetylglucosamine to form UDP-3-O-myristoylglucosamine and acetate, the committed step in lipid A biosynthesis. This is UDP-3-O-acyl-N-acetylglucosamine deacetylase from Wolinella succinogenes (strain ATCC 29543 / DSM 1740 / CCUG 13145 / JCM 31913 / LMG 7466 / NCTC 11488 / FDC 602W) (Vibrio succinogenes).